The sequence spans 592 residues: V-type ATP synthase alpha chain (592 aa).

Residue Gly-232–Thr-239 coordinates ATP.

Belongs to the ATPase alpha/beta chains family.

It carries out the reaction ATP + H2O + 4 H(+)(in) = ADP + phosphate + 5 H(+)(out). Its function is as follows. Produces ATP from ADP in the presence of a proton gradient across the membrane. The V-type alpha chain is a catalytic subunit. In Clostridium botulinum (strain Eklund 17B / Type B), this protein is V-type ATP synthase alpha chain.